The following is a 128-amino-acid chain: Lymphocyte antigen 6 complex locus protein G5c (128 aa).

An N-terminal signal peptide occupies residues 1 to 29 (MGAEYGCLPSTSQALYVILLIVLVRMSLV). Residues 37–128 (LRCYRCLLET…NPQNRVFYIP (92 aa)) form the UPAR/Ly6 domain. Cystine bridges form between C39–C66, C42–C51, C58–C85, C94–C111, and C112–C117. Residue N73 is glycosylated (N-linked (GlcNAc...) asparagine).

Forms oligomers. Post-translationally, N-glycosylated. Abundantly expressed in the epididymis.

It localises to the secreted. In terms of biological role, may have a role in hematopoietic cell differentiation. This is Lymphocyte antigen 6 complex locus protein G5c (LY6G5C) from Canis lupus familiaris (Dog).